Reading from the N-terminus, the 1925-residue chain is Diacylglycerol kinase eta (1925 aa).

A PH domain is found at 82–175 (AIIREGYLMK…WLGSLKTATA (94 aa)). 2 Phorbol-ester/DAG-type zinc fingers span residues 195–245 (HHHW…IANC) and 268–319 (PHQW…PIVC). Residues 350 to 486 (GNFSPLLVFV…DRWSIMVFEK (137 aa)) form the DAGKc domain. Disordered regions lie at residues 620–641 (EKDN…SEKE), 783–805 (ANID…TPTE), 847–872 (DKER…SEPQ), 1013–1065 (TTLC…NPQQ), 1113–1141 (DRNS…TRTY), 1167–1234 (NTTT…SSAS), 1256–1276 (IRRH…KDKD), and 1385–1405 (FSAG…PTEE). Polar residues predominate over residues 792–802 (LSPSSEAGENT). Residues 863-872 (ADVNEKSEPQ) are compositionally biased toward basic and acidic residues. Over residues 1115–1128 (NSGDNHNDNGKNEE) the composition is skewed to basic and acidic residues. Positions 1167-1187 (NTTTSTSSSISTTTTTSTTST) are enriched in low complexity. Positions 1386–1405 (SAGDKDEKPGKDKERTPTEE) are enriched in basic and acidic residues. One can recognise an SAM domain in the interval 1862-1925 (WSVNEVVTWL…LQAIKDLSEN (64 aa)).

The protein belongs to the eukaryotic diacylglycerol kinase family.

The protein resides in the cytoplasm. It catalyses the reaction a 1,2-diacyl-sn-glycerol + ATP = a 1,2-diacyl-sn-glycero-3-phosphate + ADP + H(+). In terms of biological role, phosphorylates diacylglycerol (DAG) to generate phosphatidic acid (PA). The polypeptide is Diacylglycerol kinase eta (Drosophila mojavensis (Fruit fly)).